The primary structure comprises 191 residues: 3-isopropylmalate dehydratase small subunit (191 aa).

This sequence belongs to the LeuD family. LeuD type 1 subfamily. As to quaternary structure, heterodimer of LeuC and LeuD.

The enzyme catalyses (2R,3S)-3-isopropylmalate = (2S)-2-isopropylmalate. It functions in the pathway amino-acid biosynthesis; L-leucine biosynthesis; L-leucine from 3-methyl-2-oxobutanoate: step 2/4. Functionally, catalyzes the isomerization between 2-isopropylmalate and 3-isopropylmalate, via the formation of 2-isopropylmaleate. The protein is 3-isopropylmalate dehydratase small subunit of Anaeromyxobacter sp. (strain K).